We begin with the raw amino-acid sequence, 803 residues long: Volume-regulated anion channel subunit LRRC8B (803 aa).

Residues 1-25 (MITLTELKCLADAQSSYHILKPWWD) lie on the Cytoplasmic side of the membrane. Residues 26 to 46 (VFWYYITLIMLLVAVLAGALQ) traverse the membrane as a helical segment. At 47–119 (LTQSRVLCCL…YEKQLHWFAK (73 aa)) the chain is on the extracellular side. 2 cysteine pairs are disulfide-bonded: Cys55-Cys304 and Cys109-Cys289. Asn78 is a glycosylation site (N-linked (GlcNAc...) asparagine). The chain crosses the membrane as a helical span at residues 120 to 140 (FFPYLVLLHTLIFAACSNFWL). At 141-261 (HYPSTSSRLE…DIIYRVYLKQ (121 aa)) the chain is on the cytoplasmic side. Residues Ser186 and Ser196 each carry the phosphoserine modification. A helical membrane pass occupies residues 262–282 (IIVKVILFVLIITYVPYFLTH). Residues 283–307 (ITLEIDCSVDVQAFTGYKRYQCVYS) lie on the Extracellular side of the membrane. Residues 308–328 (LAEIFKVLASFYVILVILYGL) form a helical membrane-spanning segment. Residues 329–803 (TSSYSLWWML…ERLQTCLDKC (475 aa)) lie on the Cytoplasmic side of the membrane. LRR repeat units lie at residues 464-486 (NLKELRVYHSSLVVDHPALAFLE), 488-509 (NLKILRLKFTEMGKIPRWVFHL), 511-532 (NLKELYLSGCVLPEQLSTMQLE), 539-559 (NLRTLYLKSSLSRIPQVVTDL), 562-582 (SLQKLSLDNEGSKLVVLNNLK), 586-607 (NLKSLELISCDLERIPHSIFSL), 609-630 (NLHELDLRENNLKTVEEIISFQ), 634-655 (NLSCLKLWHNNIAYIPAQIGAL), 657-678 (NLEQLSLDHNNIENLPLQLFLC), 680-701 (KLHYLDLSYNHLTFIPEEIQYL), 703-724 (NLQYFAVTNNNIEMLPDGLFQC), 726-747 (KLQCLLLGKNSLMNLSPHVGEL), and 749-771 (NLTHLELIGNYLETLPPELEGCQ).

This sequence belongs to the LRRC8 family. As to quaternary structure, heterohexamer; oligomerizes with other LRRC8 proteins (LRRC8A, LRRC8C, LRRC8D and/or LRRC8E) to form a heterohexamer. In vivo, the subunit composition may depend primarily on expression levels, and heterooligomeric channels containing various proportions of the different LRRC8 proteins may coexist.

It is found in the cell membrane. Its subcellular location is the endoplasmic reticulum membrane. The enzyme catalyses chloride(in) = chloride(out). It carries out the reaction iodide(out) = iodide(in). The catalysed reaction is taurine(out) = taurine(in). In terms of biological role, non-essential component of the volume-regulated anion channel (VRAC, also named VSOAC channel), an anion channel required to maintain a constant cell volume in response to extracellular or intracellular osmotic changes. The VRAC channel conducts iodide better than chloride and can also conduct organic osmolytes like taurine. Channel activity requires LRRC8A plus at least one other family member (LRRC8B, LRRC8C, LRRC8D or LRRC8E); channel characteristics depend on the precise subunit composition. This chain is Volume-regulated anion channel subunit LRRC8B, found in Homo sapiens (Human).